We begin with the raw amino-acid sequence, 108 residues long: UPF0060 membrane protein Mfla_0485 (108 aa).

4 helical membrane-spanning segments follow: residues 7-27 (FSLF…PYLW), 33-53 (SVWL…LLSL), 63-83 (AAYG…VDGI), and 87-107 (TWDF…MFAP).

Belongs to the UPF0060 family.

It localises to the cell inner membrane. This chain is UPF0060 membrane protein Mfla_0485, found in Methylobacillus flagellatus (strain ATCC 51484 / DSM 6875 / VKM B-1610 / KT).